Here is a 321-residue protein sequence, read N- to C-terminus: Glucokinase (321 aa).

Residue 8–13 (GDVGGT) participates in ATP binding.

It belongs to the bacterial glucokinase family.

Its subcellular location is the cytoplasm. The enzyme catalyses D-glucose + ATP = D-glucose 6-phosphate + ADP + H(+). This Cronobacter sakazakii (strain ATCC BAA-894) (Enterobacter sakazakii) protein is Glucokinase.